The chain runs to 139 residues: Large-conductance mechanosensitive channel (139 aa).

The next 2 membrane-spanning stretches (helical) occupy residues 17–37 and 88–108; these read VVDMAVGVIIGGAFGKIVTSL and TVDFLILAFVIFLMIKAIMAA.

Belongs to the MscL family. In terms of assembly, homopentamer.

The protein localises to the cell inner membrane. In terms of biological role, channel that opens in response to stretch forces in the membrane lipid bilayer. May participate in the regulation of osmotic pressure changes within the cell. This Porphyromonas gingivalis (strain ATCC 33277 / DSM 20709 / CIP 103683 / JCM 12257 / NCTC 11834 / 2561) protein is Large-conductance mechanosensitive channel.